A 37-amino-acid chain; its full sequence is Large ribosomal subunit protein bL36c (37 aa).

Belongs to the bacterial ribosomal protein bL36 family.

The protein resides in the plastid. The protein localises to the chloroplast. In Marchantia polymorpha (Common liverwort), this protein is Large ribosomal subunit protein bL36c (rpl36).